Here is a 433-residue protein sequence, read N- to C-terminus: Serine--tRNA ligase (433 aa).

235-237 (TSE) is a binding site for L-serine. 266 to 268 (RSE) is a binding site for ATP. E289 serves as a coordination point for L-serine. ATP is bound at residue 353-356 (EISS). S388 is an L-serine binding site.

Belongs to the class-II aminoacyl-tRNA synthetase family. Type-1 seryl-tRNA synthetase subfamily. In terms of assembly, homodimer. The tRNA molecule binds across the dimer.

Its subcellular location is the cytoplasm. The catalysed reaction is tRNA(Ser) + L-serine + ATP = L-seryl-tRNA(Ser) + AMP + diphosphate + H(+). It carries out the reaction tRNA(Sec) + L-serine + ATP = L-seryl-tRNA(Sec) + AMP + diphosphate + H(+). It participates in aminoacyl-tRNA biosynthesis; selenocysteinyl-tRNA(Sec) biosynthesis; L-seryl-tRNA(Sec) from L-serine and tRNA(Sec): step 1/1. Its function is as follows. Catalyzes the attachment of serine to tRNA(Ser). Is also able to aminoacylate tRNA(Sec) with serine, to form the misacylated tRNA L-seryl-tRNA(Sec), which will be further converted into selenocysteinyl-tRNA(Sec). This chain is Serine--tRNA ligase, found in Burkholderia cenocepacia (strain HI2424).